A 209-amino-acid polypeptide reads, in one-letter code: Uracil phosphoribosyltransferase (209 aa).

5-phospho-alpha-D-ribose 1-diphosphate contacts are provided by residues R79, R104, and 131–139; that span reads DPMLATGAS. Uracil-binding positions include I194 and 199-201; that span reads GDA. Residue D200 coordinates 5-phospho-alpha-D-ribose 1-diphosphate.

Belongs to the UPRTase family. Mg(2+) serves as cofactor.

It catalyses the reaction UMP + diphosphate = 5-phospho-alpha-D-ribose 1-diphosphate + uracil. It participates in pyrimidine metabolism; UMP biosynthesis via salvage pathway; UMP from uracil: step 1/1. With respect to regulation, allosterically activated by GTP. Functionally, catalyzes the conversion of uracil and 5-phospho-alpha-D-ribose 1-diphosphate (PRPP) to UMP and diphosphate. In Staphylococcus saprophyticus subsp. saprophyticus (strain ATCC 15305 / DSM 20229 / NCIMB 8711 / NCTC 7292 / S-41), this protein is Uracil phosphoribosyltransferase.